The primary structure comprises 87 residues: MYVIELALRMSPMPVSVQRKEHDSAEALYQQVRSALEQGQPRLLELCCEKVEGKRLSVLTSDLLAVQIYEKTAASGGTKRPGFSFEA.

Belongs to the UPF0367 family.

The sequence is that of UPF0367 protein SynWH7803_2240 from Synechococcus sp. (strain WH7803).